A 263-amino-acid chain; its full sequence is Fructose-bisphosphate aldolase class 1 (263 aa).

Lys177 serves as the catalytic Schiff-base intermediate with dihydroxyacetone-P.

Belongs to the DeoC/FbaB aldolase family.

It carries out the reaction beta-D-fructose 1,6-bisphosphate = D-glyceraldehyde 3-phosphate + dihydroxyacetone phosphate. Functionally, has aldolase activity with fructose 1,6-bisphosphate. May play a role in the biosynthesis of aromatic amino acids (AroAA). This is Fructose-bisphosphate aldolase class 1 (fba1) from Halobacterium salinarum (strain ATCC 29341 / DSM 671 / R1).